The primary structure comprises 508 residues: 4-trimethylaminobutyraldehyde dehydrogenase A (508 aa).

NAD(+)-binding positions include K194 and 246–250 (GSVPT). Residue E268 is the Proton acceptor of the active site. The Nucleophile role is filled by C302. Residue E405 participates in NAD(+) binding.

The protein belongs to the aldehyde dehydrogenase family. As to quaternary structure, homotetramer.

The protein resides in the cytoplasm. It is found in the cytosol. The catalysed reaction is 4-(trimethylamino)butanal + NAD(+) + H2O = 4-(trimethylamino)butanoate + NADH + 2 H(+). It catalyses the reaction an aldehyde + NAD(+) + H2O = a carboxylate + NADH + 2 H(+). It functions in the pathway amine and polyamine biosynthesis; carnitine biosynthesis. Its function is as follows. Converts gamma-trimethylaminobutyraldehyde into gamma-butyrobetaine with high efficiency (in vitro). Can catalyze the irreversible oxidation of a broad range of aldehydes to the corresponding acids in an NAD-dependent reaction, but with low efficiency. The protein is 4-trimethylaminobutyraldehyde dehydrogenase A (aldh9a1a) of Danio rerio (Zebrafish).